Consider the following 57-residue polypeptide: Large ribosomal subunit protein bL32 (57 aa).

Positions 1–16 are enriched in basic residues; it reads MAVQKSRKTRSKRGMR. The interval 1-45 is disordered; sequence MAVQKSRKTRSKRGMRRSHDALTAPAQLSVDATSGETHRRHHMTA.

This sequence belongs to the bacterial ribosomal protein bL32 family.

This chain is Large ribosomal subunit protein bL32, found in Psychromonas ingrahamii (strain DSM 17664 / CCUG 51855 / 37).